The sequence spans 637 residues: Chaperone protein HtpG (637 aa).

Residues M1–R345 are a; substrate-binding. Residues E346–K562 form a b region. The interval L563–K637 is c.

Belongs to the heat shock protein 90 family. In terms of assembly, homodimer.

It is found in the cytoplasm. Molecular chaperone. Has ATPase activity. The chain is Chaperone protein HtpG from Shewanella denitrificans (strain OS217 / ATCC BAA-1090 / DSM 15013).